Reading from the N-terminus, the 317-residue chain is Putative 2-hydroxyacid dehydrogenase SA2098 (317 aa).

Residues 155–156 (EI), 234–236 (ASR), and D260 each bind NAD(+). R236 is a catalytic residue. E265 is a catalytic residue. H283 functions as the Proton donor in the catalytic mechanism. Residue 283–286 (HIGN) coordinates NAD(+).

The protein belongs to the D-isomer specific 2-hydroxyacid dehydrogenase family.

This chain is Putative 2-hydroxyacid dehydrogenase SA2098, found in Staphylococcus aureus (strain N315).